A 165-amino-acid chain; its full sequence is Phosphopantetheine adenylyltransferase (165 aa).

Residue Thr10 coordinates substrate. ATP contacts are provided by residues 10 to 11 (TF) and His18. Substrate contacts are provided by Lys42, Leu75, and Arg89. ATP contacts are provided by residues 90–92 (GLR), Glu100, and 125–131 (YTYVASS).

Belongs to the bacterial CoaD family. In terms of assembly, homohexamer. The cofactor is Mg(2+).

Its subcellular location is the cytoplasm. It catalyses the reaction (R)-4'-phosphopantetheine + ATP + H(+) = 3'-dephospho-CoA + diphosphate. The protein operates within cofactor biosynthesis; coenzyme A biosynthesis; CoA from (R)-pantothenate: step 4/5. Its function is as follows. Reversibly transfers an adenylyl group from ATP to 4'-phosphopantetheine, yielding dephospho-CoA (dPCoA) and pyrophosphate. This chain is Phosphopantetheine adenylyltransferase, found in Chlorobium phaeobacteroides (strain BS1).